The primary structure comprises 84 residues: Exodeoxyribonuclease 7 small subunit (84 aa).

The protein belongs to the XseB family. Heterooligomer composed of large and small subunits.

The protein localises to the cytoplasm. It carries out the reaction Exonucleolytic cleavage in either 5'- to 3'- or 3'- to 5'-direction to yield nucleoside 5'-phosphates.. Bidirectionally degrades single-stranded DNA into large acid-insoluble oligonucleotides, which are then degraded further into small acid-soluble oligonucleotides. In Yersinia pseudotuberculosis serotype O:1b (strain IP 31758), this protein is Exodeoxyribonuclease 7 small subunit.